The primary structure comprises 111 residues: Probable 4-amino-4-deoxy-L-arabinose-phosphoundecaprenol flippase subunit ArnE (111 aa).

Over 1–35 (MIWLTLVFASLLSVAGQLCQKQATCFAAVNKRRKH) the chain is Cytoplasmic. Residues 36 to 56 (IVLWLGLALACLGLAMVLWLL) form a helical membrane-spanning segment. Positions 40 to 109 (LGLALACLGL…IIGGIVILGS (70 aa)) constitute an EamA domain. At 57–60 (VLQN) the chain is on the periplasmic side. The chain crosses the membrane as a helical span at residues 61–81 (VPVGIAYPMLSLNFVWVTLAA). Residues 82 to 87 (VKLWHE) lie on the Cytoplasmic side of the membrane. A helical transmembrane segment spans residues 88–108 (PVSLRHWCGLAFIIGGIVILG). Topologically, residues 109–111 (STV) are periplasmic.

The protein belongs to the ArnE family. In terms of assembly, heterodimer of ArnE and ArnF.

The protein resides in the cell inner membrane. Its pathway is bacterial outer membrane biogenesis; lipopolysaccharide biosynthesis. Functionally, translocates 4-amino-4-deoxy-L-arabinose-phosphoundecaprenol (alpha-L-Ara4N-phosphoundecaprenol) from the cytoplasmic to the periplasmic side of the inner membrane. In Escherichia coli O81 (strain ED1a), this protein is Probable 4-amino-4-deoxy-L-arabinose-phosphoundecaprenol flippase subunit ArnE.